The chain runs to 680 residues: tRNA 5-methylaminomethyl-2-thiouridine biosynthesis bifunctional protein MnmC (680 aa).

Residues Met1–Thr251 form a tRNA (mnm(5)s(2)U34)-methyltransferase region. An FAD-dependent cmnm(5)s(2)U34 oxidoreductase region spans residues Ile277–Ile680.

In the N-terminal section; belongs to the methyltransferase superfamily. tRNA (mnm(5)s(2)U34)-methyltransferase family. The protein in the C-terminal section; belongs to the DAO family. FAD serves as cofactor.

Its subcellular location is the cytoplasm. It catalyses the reaction 5-aminomethyl-2-thiouridine(34) in tRNA + S-adenosyl-L-methionine = 5-methylaminomethyl-2-thiouridine(34) in tRNA + S-adenosyl-L-homocysteine + H(+). Catalyzes the last two steps in the biosynthesis of 5-methylaminomethyl-2-thiouridine (mnm(5)s(2)U) at the wobble position (U34) in tRNA. Catalyzes the FAD-dependent demodification of cmnm(5)s(2)U34 to nm(5)s(2)U34, followed by the transfer of a methyl group from S-adenosyl-L-methionine to nm(5)s(2)U34, to form mnm(5)s(2)U34. In Aliivibrio fischeri (strain ATCC 700601 / ES114) (Vibrio fischeri), this protein is tRNA 5-methylaminomethyl-2-thiouridine biosynthesis bifunctional protein MnmC.